The sequence spans 197 residues: Phosphoheptose isomerase (197 aa).

One can recognise an SIS domain in the interval 41–197 (VVETFRRGGK…EIVERTLFEE (157 aa)). Residue 56–58 (NGG) coordinates substrate. Zn(2+) is bound by residues H65 and E69. Substrate is bound by residues E69, 98–99 (ND), 124–126 (STS), S129, and Q176. 2 residues coordinate Zn(2+): Q176 and H184.

The protein belongs to the SIS family. GmhA subfamily. It depends on Zn(2+) as a cofactor.

Its subcellular location is the cytoplasm. It catalyses the reaction 2 D-sedoheptulose 7-phosphate = D-glycero-alpha-D-manno-heptose 7-phosphate + D-glycero-beta-D-manno-heptose 7-phosphate. It functions in the pathway carbohydrate biosynthesis; D-glycero-D-manno-heptose 7-phosphate biosynthesis; D-glycero-alpha-D-manno-heptose 7-phosphate and D-glycero-beta-D-manno-heptose 7-phosphate from sedoheptulose 7-phosphate: step 1/1. In terms of biological role, catalyzes the isomerization of sedoheptulose 7-phosphate in D-glycero-D-manno-heptose 7-phosphate. This Roseiflexus sp. (strain RS-1) protein is Phosphoheptose isomerase.